Reading from the N-terminus, the 396-residue chain is S-adenosylmethionine synthase (396 aa).

ATP is bound at residue His16. Asp18 is a binding site for Mg(2+). Glu44 lines the K(+) pocket. L-methionine is bound by residues Glu57 and Gln100. The flexible loop stretch occupies residues Gln100–Glu110. Residues Asp175–Lys177, Arg242–Phe243, Asp251, Arg257–Lys258, Ala274, and Lys278 each bind ATP. Asp251 serves as a coordination point for L-methionine. Lys282 lines the L-methionine pocket.

This sequence belongs to the AdoMet synthase family. As to quaternary structure, homotetramer; dimer of dimers. Mg(2+) serves as cofactor. The cofactor is K(+).

The protein localises to the cytoplasm. The enzyme catalyses L-methionine + ATP + H2O = S-adenosyl-L-methionine + phosphate + diphosphate. It functions in the pathway amino-acid biosynthesis; S-adenosyl-L-methionine biosynthesis; S-adenosyl-L-methionine from L-methionine: step 1/1. Its function is as follows. Catalyzes the formation of S-adenosylmethionine (AdoMet) from methionine and ATP. The overall synthetic reaction is composed of two sequential steps, AdoMet formation and the subsequent tripolyphosphate hydrolysis which occurs prior to release of AdoMet from the enzyme. This Streptococcus suis (strain 05ZYH33) protein is S-adenosylmethionine synthase.